The sequence spans 154 residues: Prefoldin subunit 5 (154 aa).

Position 2 is an N-acetylalanine (A2). Position 42 is an N6-acetyllysine (K42). S56 carries the phosphoserine modification.

This sequence belongs to the prefoldin subunit alpha family. In terms of assembly, heterohexamer of two PFD-alpha type and four PFD-beta type subunits.

It is found in the nucleus. In terms of biological role, binds specifically to cytosolic chaperonin (c-CPN) and transfers target proteins to it. Binds to nascent polypeptide chain and promotes folding in an environment in which there are many competing pathways for nonnative proteins. Represses the transcriptional activity of MYC. The protein is Prefoldin subunit 5 (Pfdn5) of Mus musculus (Mouse).